The primary structure comprises 252 residues: tRNA (guanine-N(1)-)-methyltransferase (252 aa).

S-adenosyl-L-methionine is bound by residues G113 and V133–L138.

This sequence belongs to the RNA methyltransferase TrmD family. Homodimer.

It is found in the cytoplasm. It catalyses the reaction guanosine(37) in tRNA + S-adenosyl-L-methionine = N(1)-methylguanosine(37) in tRNA + S-adenosyl-L-homocysteine + H(+). Specifically methylates guanosine-37 in various tRNAs. In Francisella tularensis subsp. holarctica (strain FTNF002-00 / FTA), this protein is tRNA (guanine-N(1)-)-methyltransferase.